The primary structure comprises 320 residues: Putative olfactory receptor 2W5 pseudogene (320 aa).

Asn-5 carries N-linked (GlcNAc...) asparagine glycosylation. Helical transmembrane passes span 30–50 (VILIFCILTLVGNTAIILLLV), 58–78 (PMYFFLGNLSFLDLCFTASIA), 98–118 (VAQLYIYMMLGSTECVLLVVM), and 140–160 (LCLQLVTVAWCCGFLNSFIMC). Cysteines 97 and 179 form a disulfide. The tract at residues 267–320 (LPRSGEVPDSLLHHRHSQHQPPHLHFEEQGCEGDHEETSGVGERGWGASTRGTL) is disordered. Over residues 290-304 (LHFEEQGCEGDHEET) the composition is skewed to basic and acidic residues.

The protein belongs to the G-protein coupled receptor 1 family.

Its subcellular location is the cell membrane. In terms of biological role, odorant receptor. The chain is Putative olfactory receptor 2W5 pseudogene from Homo sapiens (Human).